The chain runs to 241 residues: Zinc finger CCHC domain-containing protein 17 (241 aa).

Residues 16-88 (YTIFQGEVAM…DRIKVSLSMK (73 aa)) enclose the S1 motif domain. A Phosphoserine modification is found at serine 114. A CCHC-type zinc finger spans residues 131–148 (TTCKKCGCKGHFAKDCFM). An N6-acetyllysine modification is found at lysine 144. Residues 161–241 (EEEEKEEAKS…KKKHKKKHKE (81 aa)) are disordered. Over residues 166 to 178 (EEAKSAEFEKPDP) the composition is skewed to basic and acidic residues. Positions 182-198 (PSRKRKKEKKKKKHRDR) are enriched in basic residues. Serine 183 carries the phosphoserine modification. The segment covering 211 to 225 (DTGKRARHTSKDSKA) has biased composition (basic and acidic residues). A compositionally biased stretch (basic residues) spans 226 to 241 (AKKKKKKKKHKKKHKE).

Interacts with PNN. Associates with the 60S ribosomal subunit.

It localises to the nucleus. Its subcellular location is the nucleolus. In Homo sapiens (Human), this protein is Zinc finger CCHC domain-containing protein 17 (ZCCHC17).